The chain runs to 323 residues: Methionyl-tRNA formyltransferase (323 aa).

117-120 (SLLP) contributes to the (6S)-5,6,7,8-tetrahydrofolate binding site.

This sequence belongs to the Fmt family.

It catalyses the reaction L-methionyl-tRNA(fMet) + (6R)-10-formyltetrahydrofolate = N-formyl-L-methionyl-tRNA(fMet) + (6S)-5,6,7,8-tetrahydrofolate + H(+). Functionally, attaches a formyl group to the free amino group of methionyl-tRNA(fMet). The formyl group appears to play a dual role in the initiator identity of N-formylmethionyl-tRNA by promoting its recognition by IF2 and preventing the misappropriation of this tRNA by the elongation apparatus. The sequence is that of Methionyl-tRNA formyltransferase from Albidiferax ferrireducens (strain ATCC BAA-621 / DSM 15236 / T118) (Rhodoferax ferrireducens).